The following is a 252-amino-acid chain: Metalloprotease LoiP (252 aa).

A signal peptide spans 1-18 (MKIRALLVAMSVATVLTG). The N-palmitoyl cysteine moiety is linked to residue cysteine 19. A lipid anchor (S-diacylglycerol cysteine) is attached at cysteine 19. Cysteine 53 and cysteine 108 are joined by a disulfide. Histidine 130 is a binding site for Zn(2+). Glutamate 131 is an active-site residue. Histidine 134 and glutamate 189 together coordinate Zn(2+). The disordered stretch occupies residues 224-252 (RQSSMFDDHPASAERAQHIRDRMSADGIK).

The protein belongs to the peptidase M48B family. As to quaternary structure, interacts with Era and BepA. Requires Zn(2+) as cofactor. Post-translationally, the intramolecular disulfide bond improves the stability and the activity of LoiP. It forms even in the absence of the oxido-reductase DsbA.

It localises to the cell outer membrane. In terms of biological role, metalloprotease that cleaves substrates preferentially between Phe-Phe residues. Plays a role in response to some stress conditions. Seems to regulate the expression of speB. The protein is Metalloprotease LoiP (loiP) of Escherichia coli (strain K12).